We begin with the raw amino-acid sequence, 488 residues long: Protein nucleotidyltransferase YdiU (488 aa).

Positions 91, 93, 94, 114, 126, 127, 177, and 184 each coordinate ATP. Asp253 functions as the Proton acceptor in the catalytic mechanism. Residues Asn254 and Asp263 each coordinate Mg(2+). Asp263 provides a ligand contact to ATP.

This sequence belongs to the SELO family. Mg(2+) is required as a cofactor. It depends on Mn(2+) as a cofactor.

It catalyses the reaction L-seryl-[protein] + ATP = 3-O-(5'-adenylyl)-L-seryl-[protein] + diphosphate. The catalysed reaction is L-threonyl-[protein] + ATP = 3-O-(5'-adenylyl)-L-threonyl-[protein] + diphosphate. It carries out the reaction L-tyrosyl-[protein] + ATP = O-(5'-adenylyl)-L-tyrosyl-[protein] + diphosphate. The enzyme catalyses L-histidyl-[protein] + UTP = N(tele)-(5'-uridylyl)-L-histidyl-[protein] + diphosphate. It catalyses the reaction L-seryl-[protein] + UTP = O-(5'-uridylyl)-L-seryl-[protein] + diphosphate. The catalysed reaction is L-tyrosyl-[protein] + UTP = O-(5'-uridylyl)-L-tyrosyl-[protein] + diphosphate. Nucleotidyltransferase involved in the post-translational modification of proteins. It can catalyze the addition of adenosine monophosphate (AMP) or uridine monophosphate (UMP) to a protein, resulting in modifications known as AMPylation and UMPylation. The chain is Protein nucleotidyltransferase YdiU from Bacillus thuringiensis subsp. konkukian (strain 97-27).